Here is a 67-residue protein sequence, read N- to C-terminus: MGTVRERAIKRVAYKLVKQYPDLWTEDFEHNKMILSQIAEIKSKVYRNRIAGYITRLKVRERQGTLV.

This sequence belongs to the eukaryotic ribosomal protein eS17 family.

The chain is Small ribosomal subunit protein eS17 from Korarchaeum cryptofilum (strain OPF8).